A 156-amino-acid chain; its full sequence is Transcription elongation factor GreA (156 aa).

The stretch at 2–27 forms a coiled coil; sequence EKTFPMTKEGLDKLKAELENLKLVKR.

This sequence belongs to the GreA/GreB family.

In terms of biological role, necessary for efficient RNA polymerase transcription elongation past template-encoded arresting sites. The arresting sites in DNA have the property of trapping a certain fraction of elongating RNA polymerases that pass through, resulting in locked ternary complexes. Cleavage of the nascent transcript by cleavage factors such as GreA or GreB allows the resumption of elongation from the new 3'terminus. GreA releases sequences of 2 to 3 nucleotides. This chain is Transcription elongation factor GreA, found in Lactococcus lactis subsp. cremoris (strain SK11).